A 312-amino-acid polypeptide reads, in one-letter code: Apolipoprotein E (312 aa).

The first 18 residues, 1–18 (MKALWAVLLVTLLAGCLA), serve as a signal peptide directing secretion. 8 consecutive repeat copies span residues 72–93 (VLMEDTMTEVKAYKKELEEQLG), 94–115 (PVAEETRARLAKEVQAAQARLG), 116–137 (ADMEDLRNRLGQYRNEVHTMLG), 138–159 (QSTEEIRARLSTHLRKMRKRLM), 160–181 (RDAEDLQKRLAVYKAGAREGAE), 182–203 (RGVSALRERLGPLVEQGRQRTA), 204–225 (NLGAGAAQPLRDRAQAFGDRIR), and 226–247 (GRLEEVGNQARDRLEEVREHME). The segment at 72 to 247 (VLMEDTMTEV…RLEEVREHME (176 aa)) is 8 X 22 AA approximate tandem repeats. A Methionine sulfoxide modification is found at M135. Residue S139 is modified to Phosphoserine. The interval 150–160 (HLRKMRKRLMR) is LDL and other lipoprotein receptors binding. 154–157 (MRKR) is a binding site for heparin. Residues 202–282 (TANLGAGAAQ…GWFEPIVEDM (81 aa)) are lipid-binding and lipoprotein association. 221 to 228 (GDRIRGRL) contributes to the heparin binding site. The tract at residues 258–312 (QQIRLQAEIFQARLKGWFEPIVEDMHRQWANLMEKIQASVATNPIISTPMPQENQ) is homooligomerization. Residues 270–282 (RLKGWFEPIVEDM) form a specificity for association with VLDL region.

The protein belongs to the apolipoprotein A1/A4/E family. In terms of assembly, homotetramer. May interact with ABCA1; functionally associated with ABCA1 in the biogenesis of HDLs. May interact with APP/A4 amyloid-beta peptide; the interaction is extremely stable in vitro but its physiological significance is unclear. May interact with MAPT. May interact with MAP2. In the cerebrospinal fluid, interacts with secreted SORL1. Interacts with PMEL; this allows the loading of PMEL luminal fragment on ILVs to induce fibril nucleation. APOE exists as multiple glycosylated and sialylated glycoforms within cells and in plasma. The extent of glycosylation and sialylation are tissue and context specific. In terms of processing, glycated in plasma VLDL. Post-translationally, phosphorylated by FAM20C in the extracellular medium.

The protein resides in the secreted. The protein localises to the extracellular space. It localises to the extracellular matrix. It is found in the extracellular vesicle. Its subcellular location is the endosome. The protein resides in the multivesicular body. Its function is as follows. APOE is an apolipoprotein, a protein associating with lipid particles, that mainly functions in lipoprotein-mediated lipid transport between organs via the plasma and interstitial fluids. APOE is a core component of plasma lipoproteins and is involved in their production, conversion and clearance. Apolipoproteins are amphipathic molecules that interact both with lipids of the lipoprotein particle core and the aqueous environment of the plasma. As such, APOE associates with chylomicrons, chylomicron remnants, very low density lipoproteins (VLDL) and intermediate density lipoproteins (IDL) but shows a preferential binding to high-density lipoproteins (HDL). It also binds a wide range of cellular receptors including the LDL receptor/LDLR, the LDL receptor-related proteins LRP1, LRP2 and LRP8 and the very low-density lipoprotein receptor/VLDLR that mediate the cellular uptake of the APOE-containing lipoprotein particles. Finally, APOE also has a heparin-binding activity and binds heparan-sulfate proteoglycans on the surface of cells, a property that supports the capture and the receptor-mediated uptake of APOE-containing lipoproteins by cells. A main function of APOE is to mediate lipoprotein clearance through the uptake of chylomicrons, VLDLs, and HDLs by hepatocytes. APOE is also involved in the biosynthesis by the liver of VLDLs as well as their uptake by peripheral tissues ensuring the delivery of triglycerides and energy storage in muscle, heart and adipose tissues. By participating in the lipoprotein-mediated distribution of lipids among tissues, APOE plays a critical role in plasma and tissues lipid homeostasis. APOE is also involved in two steps of reverse cholesterol transport, the HDLs-mediated transport of cholesterol from peripheral tissues to the liver, and thereby plays an important role in cholesterol homeostasis. First, it is functionally associated with ABCA1 in the biogenesis of HDLs in tissues. Second, it is enriched in circulating HDLs and mediates their uptake by hepatocytes. APOE also plays an important role in lipid transport in the central nervous system, regulating neuron survival and sprouting. The sequence is that of Apolipoprotein E (Apoe) from Mus pahari (Gairdner's shrew-mouse).